Consider the following 263-residue polypeptide: Lens fiber major intrinsic protein (263 aa).

Over 1–9 the chain is Cytoplasmic; sequence MWELRSASF. The chain crosses the membrane as a helical span at residues 10–29; sequence WRAIFAEFFATLFYVFFGLG. The Extracellular portion of the chain corresponds to 30-41; that stretch reads SSLRWAPGPLHV. Residues 42–59 form a helical membrane-spanning segment; sequence LQVALAFGLALATLVQTV. Residues 60-61 lie on the Cytoplasmic side of the membrane; that stretch reads GH. An intramembrane region (discontinuously helical) is located at residues 62-77; sequence ISGAHVNPAVTFAFLV. Positions 68 to 70 match the NPA 1 motif; sequence NPA. Topologically, residues 78–82 are cytoplasmic; it reads GSQMS. The chain crosses the membrane as a helical span at residues 83 to 106; it reads LLRAFCYIAAQLLGAVAGAAVLYS. At 107–127 the chain is on the extracellular side; the sequence is VTPPAVRGNLALNTLHAGVSV. A helical transmembrane segment spans residues 128 to 148; sequence GQATTVEIFLTLQFVLCIFAT. Residues 149–156 are Cytoplasmic-facing; the sequence is YDERRNGR. The chain crosses the membrane as a helical span at residues 157–175; it reads MGSVALAVGFSLTLGHLFG. Topologically, residues 176-178 are extracellular; sequence MYY. An intramembrane region (discontinuously helical) is located at residues 179–193; that stretch reads TGAGMNPARSFAPAI. An NPA 2 motif is present at residues 184 to 186; it reads NPA. Residues 194-200 are Extracellular-facing; sequence LTRNFSN. Residues 201–222 traverse the membrane as a helical segment; that stretch reads HWVYWVGPIIGGGLGSLLYDFL. Residues 223 to 263 are Cytoplasmic-facing; that stretch reads LFPRLKSVSERLSILKGARPSDSNGQPEGTGEPVELKTQAL. The interval 227–237 is interaction with CALM; it reads LKSVSERLSIL. Phosphoserine occurs at positions 235, 243, and 245. The interval 240 to 263 is disordered; it reads ARPSDSNGQPEGTGEPVELKTQAL. The residue at position 246 (Asn-246) is a Deamidated asparagine.

Belongs to the MIP/aquaporin (TC 1.A.8) family. In terms of assembly, homotetramer; each monomer provides an independent water pore. Two homotetramers on opposing membranes can dimerize, forming a cell-cell junction. Interacts with CALM; the calcium-calmodulin/CALM complex interacts with the cytoplasmic domains of two aquaporins, leading to channel closure. Interacts with BFSP1 (via C-terminus); prevents calcium-dependent inhibition of the water channel activity. Post-translationally, subject to partial proteolytic cleavage in the eye lens core. Partial proteolysis promotes interactions between tetramers from adjoining membranes. Fatty acylated at Met-1 and Lys-238. The acyl modifications, in decreasing order of ion abundance, are: oleoyl (C18:1) &gt; palmitoyl (C16:0) &gt; stearoyl (C18:0) &gt; eicosenoyl (C20:1) &gt; dihomo-gamma-linolenoyl (C20:3) &gt; palmitoleoyl (C16:1) &gt; eicosadienoyl (C20:2).

The protein resides in the cell membrane. The protein localises to the cell junction. The enzyme catalyses H2O(in) = H2O(out). Its activity is regulated as follows. The water channel activity is inhibited by calcium through calmodulin/CALM. Aquaporins form homotetrameric transmembrane channels, with each monomer independently mediating water transport across the plasma membrane along its osmotic gradient. Specifically expressed in lens fiber cells, this aquaporin is crucial for maintaining lens water homeostasis and transparency. Beyond water permeability, it also acts as a cell-to-cell adhesion molecule, forming thin junctions between lens fiber cells that are essential for maintaining the ordered structure and transparency of the lens. The chain is Lens fiber major intrinsic protein from Rattus norvegicus (Rat).